The following is a 555-amino-acid chain: MDNEKGTSSSDLTTRQRKPLGWKAMPYIIGNETLERLATFGLMANFMVYMVREYHMDQVQAVTLINTWSALTNFAPIIGAFISDSYTGKFNTIVFGSIAELLGMLVLTFTSLVPNLRPPPCTADQITGQCIPYSYSQLYVLLSGLFLLSVGTGGIRSCSVPFSLDQFDDSTEEGREGSRSFFSWYYTTHTIVQLVSMTLVLYVQNNISWGIGFAIPTVLNFFALLLLFVGTRYYVFVKPEGSVFSGVFKVLVAAYKKRKARFTSGIDYHQPLLETDLQSNKLVLTDQFRFLNKAVIVMNNDEAGNEEWRTCTVRQIEDIKSIISIIPIFASSIIGFLAMNQQQTFTVSQALKMDLQFPGTSYLIPPASITVISLLNIGIWLPFYETVLVRHIENITKQNGGISLLQKVGIGNIFSISTMLISGIVERKRRDLSLNGVKMSVFWLTPQQVLMGFYQVFTIVGLTEFFNKQVPINMRSIGNSLLYLGLSLASYLSSAMVSIVHSVTARGGQSWLTDDIDKSKLDCFYYFIAALSTLNFIFFFWCARRYRYRNYSNEQ.

The next 12 helical transmembrane spans lie at 62-82 (VTLI…GAFI), 93-113 (IVFG…TSLV), 135-155 (YSQL…TGGI), 181-201 (FFSW…TLVL), 209-229 (WGIG…LLFV), 234-254 (YVFV…LVAA), 319-339 (IKSI…FLAM), 363-383 (LIPP…WLPF), 405-425 (LQKV…SGIV), 441-461 (VFWL…TIVG), 480-500 (SLLY…VSIV), and 523-543 (CFYY…FWCA).

This sequence belongs to the major facilitator superfamily. Proton-dependent oligopeptide transporter (POT/PTR) (TC 2.A.17) family. As to expression, not detected.

The protein resides in the membrane. The protein is Putative protein NRT1/ PTR FAMILY 2.14 (NPF2.14) of Arabidopsis thaliana (Mouse-ear cress).